Consider the following 249-residue polypeptide: Coproheme decarboxylase (249 aa).

Residue Y145 is part of the active site. Fe-coproporphyrin III contacts are provided by residues 145-149 (YPMAR) and H172.

This sequence belongs to the ChdC family. Type 1 subfamily. The cofactor is Fe-coproporphyrin III.

It catalyses the reaction Fe-coproporphyrin III + 2 H2O2 + 2 H(+) = heme b + 2 CO2 + 4 H2O. The enzyme catalyses Fe-coproporphyrin III + H2O2 + H(+) = harderoheme III + CO2 + 2 H2O. It carries out the reaction harderoheme III + H2O2 + H(+) = heme b + CO2 + 2 H2O. It participates in porphyrin-containing compound metabolism; protoheme biosynthesis. Involved in coproporphyrin-dependent heme b biosynthesis. Catalyzes the decarboxylation of Fe-coproporphyrin III (coproheme) to heme b (protoheme IX), the last step of the pathway. The reaction occurs in a stepwise manner with a three-propionate intermediate. The protein is Coproheme decarboxylase of Oceanobacillus iheyensis (strain DSM 14371 / CIP 107618 / JCM 11309 / KCTC 3954 / HTE831).